Here is a 114-residue protein sequence, read N- to C-terminus: Probable 4-amino-4-deoxy-L-arabinose-phosphoundecaprenol flippase subunit ArnE (114 aa).

3 helical membrane passes run 38–58 (LTLRWLAIAVVSLGLGMLLWL), 64–84 (LPLSVAYPMLSFNFVLVTLAA), and 94–114 (LRHWLGVAAIMFGILLMSWHL). The region spanning 43-112 (LAIAVVSLGL…IMFGILLMSW (70 aa)) is the EamA domain.

Belongs to the ArnE family. Heterodimer of ArnE and ArnF.

The protein resides in the cell inner membrane. The protein operates within bacterial outer membrane biogenesis; lipopolysaccharide biosynthesis. Its function is as follows. Translocates 4-amino-4-deoxy-L-arabinose-phosphoundecaprenol (alpha-L-Ara4N-phosphoundecaprenol) from the cytoplasmic to the periplasmic side of the inner membrane. The chain is Probable 4-amino-4-deoxy-L-arabinose-phosphoundecaprenol flippase subunit ArnE from Yersinia pseudotuberculosis serotype O:3 (strain YPIII).